A 1414-amino-acid polypeptide reads, in one-letter code: Phenyloxazoline synthase MbtB (1414 aa).

Residues 5–78 (TACSEIIRAE…AWSQLVSAGT (74 aa)) form the Carrier 1 domain. Position 39 is an O-(pantetheine 4'-phosphoryl)serine (S39). The interval 96–394 (EGEPFPVAPM…SSLLLDVDLT (299 aa)) is condensation/cyclization. The adenylation stretch occupies residues 579-975 (SYAQLRDQAS…RLPGVHAAAA (397 aa)). Residues 1057-1135 (APRTVLQRAL…ALAQLLTGRE (79 aa)) enclose the Carrier 2 domain. S1094 bears the O-(pantetheine 4'-phosphoryl)serine mark. The interval 1188–1413 (GAVLVFPHAG…AVARMVSADV (226 aa)) is thioesterase.

It belongs to the ATP-dependent AMP-binding enzyme family. MbtB subfamily. Pantetheine 4'-phosphate serves as cofactor. Post-translationally, 4'-phosphopantetheine is transferred from CoA to a specific serine in each of the two carrier protein domains, leading to their activation from apo to holo forms.

It functions in the pathway siderophore biosynthesis; mycobactin biosynthesis. In terms of biological role, involved in the initial steps of the mycobactin biosynthetic pathway. Putatively couples activated salicylic acid with serine or threonine and cyclizes this precursor to the hydroxyphenyloxazoline ring system present in this class of siderophores. Essential for growth in macrophages. This is Phenyloxazoline synthase MbtB (mbtB) from Mycobacterium tuberculosis (strain CDC 1551 / Oshkosh).